Consider the following 170-residue polypeptide: Crossover junction endodeoxyribonuclease RuvC (170 aa).

Residues aspartate 11, glutamate 71, and aspartate 143 contribute to the active site. Mg(2+)-binding residues include aspartate 11, glutamate 71, and aspartate 143.

This sequence belongs to the RuvC family. In terms of assembly, homodimer which binds Holliday junction (HJ) DNA. The HJ becomes 2-fold symmetrical on binding to RuvC with unstacked arms; it has a different conformation from HJ DNA in complex with RuvA. In the full resolvosome a probable DNA-RuvA(4)-RuvB(12)-RuvC(2) complex forms which resolves the HJ. Mg(2+) is required as a cofactor.

Its subcellular location is the cytoplasm. The enzyme catalyses Endonucleolytic cleavage at a junction such as a reciprocal single-stranded crossover between two homologous DNA duplexes (Holliday junction).. Its function is as follows. The RuvA-RuvB-RuvC complex processes Holliday junction (HJ) DNA during genetic recombination and DNA repair. Endonuclease that resolves HJ intermediates. Cleaves cruciform DNA by making single-stranded nicks across the HJ at symmetrical positions within the homologous arms, yielding a 5'-phosphate and a 3'-hydroxyl group; requires a central core of homology in the junction. The consensus cleavage sequence is 5'-(A/T)TT(C/G)-3'. Cleavage occurs on the 3'-side of the TT dinucleotide at the point of strand exchange. HJ branch migration catalyzed by RuvA-RuvB allows RuvC to scan DNA until it finds its consensus sequence, where it cleaves and resolves the cruciform DNA. This chain is Crossover junction endodeoxyribonuclease RuvC, found in Rhizobium meliloti (strain 1021) (Ensifer meliloti).